The sequence spans 489 residues: Cytochrome P450 2C70 (489 aa).

Residues 1–27 form the signal peptide; that stretch reads MALFIFLGIWLSCLVFLFLWNQHHVRR. Cys434 is a heme binding site.

Belongs to the cytochrome P450 family. Heme is required as a cofactor.

It is found in the endoplasmic reticulum membrane. Its subcellular location is the microsome membrane. The catalysed reaction is chenodeoxycholate + reduced [NADPH--hemoprotein reductase] + O2 = alpha-muricholate + oxidized [NADPH--hemoprotein reductase] + H2O + H(+). It catalyses the reaction ursodeoxycholate + reduced [NADPH--hemoprotein reductase] + O2 = beta-muricholate + oxidized [NADPH--hemoprotein reductase] + H2O + H(+). Functionally, a cytochrome P450 monooxygenase involved in muricholic acid (MCA) synthesis. Hydroxylates at the 6-beta position two major bile acids, chenodeoxycholic acid (CDCA) and ursodeoxycholic acid (UDCA) to form alpha-MCA and beta-MCA, respectively. May regulate NR1H4/farnesoid X receptor signaling, as taurine-conjugated MCAs are antagonists of NR1H4. Mechanistically, uses molecular oxygen inserting one oxygen atom into a substrate, and reducing the second into a water molecule, with two electrons provided by NADPH via cytochrome P450 reductase (CPR; NADPH-ferrihemoprotein reductase). This chain is Cytochrome P450 2C70, found in Rattus norvegicus (Rat).